The chain runs to 712 residues: MSTQYDSDSSPAASNSGSADPALAELAQQWQSLADQVRHHREVYYYGNPEISDAEFDALLTRLQEFENSHPEAVTGPSPTTEVAPSPPESSPFRNVDHQEPMLSLDNVFDTEQLSSWLDRTPAKTYLTELKIDGASINLLYRNGVLELALTRGDGTTGEDITHNARTLSDIPARLQPSEDFPVPEIVEIRGEVFIRVEDFAKMNAQRQAEGQKMFANPRNAAAGAMRQKDPAETARRPLRLICHGIGAREGFTPASQHAAYEALAAWGLPVSPYTKQVHSAKEVLEQVAYWADHRHDADHEMDGLVIKVDDTESQQRLGTTSRAPRWAIAYKYPPEEARTRLHDIRLGIGRTGRATPYAVMEPKYVAGSTVTMATLHNPSEAHRKGVRLGDEIMIRKAGEVIPEVLGPVEDARNGAEREFLFSSLCPECGTPLAPARGDDADWRCPNTRYCPGQLHTRLTYIAGRGAFDIDALGEKAAYDLIHSGVLPDETGLFSLTEEDLRRTDAYTTKSGALNKQGETLLTTLAAAKEVDLWRVIVALSIRHVGPTAAKALANHYGSIPDVAAADVETMSTVDGVGPIIAESVRDWFAVSWHQEIVDAWAAAGVRMEQDVTEQPSADAAGSIQADLLAGLSIVVTGTLEDFDRSSAKEAIESRGGKATGSVSKKTDYLVAGAKAGSKLTKAEELGIPVLDEAGFHKLLSEGPGKGDAEED.

Positions Met1 to Ala22 are enriched in low complexity. The tract at residues Met1 to Leu23 is disordered. Asp53–Asp57 is a binding site for NAD(+). The tract at residues Ser69–Phe93 is disordered. NAD(+)-binding positions include Ser104–Leu105 and Glu129. The N6-AMP-lysine intermediate role is filled by Lys131. NAD(+)-binding residues include Arg152, Glu192, Lys308, and Lys332. Zn(2+)-binding residues include Cys426, Cys429, Cys445, and Cys451. Residues Ile624–Asp712 enclose the BRCT domain.

This sequence belongs to the NAD-dependent DNA ligase family. LigA subfamily. It depends on Mg(2+) as a cofactor. Mn(2+) serves as cofactor.

The catalysed reaction is NAD(+) + (deoxyribonucleotide)n-3'-hydroxyl + 5'-phospho-(deoxyribonucleotide)m = (deoxyribonucleotide)n+m + AMP + beta-nicotinamide D-nucleotide.. Its function is as follows. DNA ligase that catalyzes the formation of phosphodiester linkages between 5'-phosphoryl and 3'-hydroxyl groups in double-stranded DNA using NAD as a coenzyme and as the energy source for the reaction. It is essential for DNA replication and repair of damaged DNA. In Corynebacterium urealyticum (strain ATCC 43042 / DSM 7109), this protein is DNA ligase.